A 192-amino-acid polypeptide reads, in one-letter code: Flavin prenyltransferase UbiX (192 aa).

Residues 10–12 (GAS), Ser-36, 92–95 (SVAT), and Arg-127 each bind FMN. Dimethylallyl phosphate-binding residues include Tyr-157 and Lys-173.

This sequence belongs to the UbiX/PAD1 family.

The enzyme catalyses dimethylallyl phosphate + FMNH2 = prenylated FMNH2 + phosphate. In terms of biological role, flavin prenyltransferase that catalyzes the synthesis of the prenylated FMN cofactor (prenyl-FMN) for 4-hydroxy-3-polyprenylbenzoic acid decarboxylase UbiD. The prenyltransferase is metal-independent and links a dimethylallyl moiety from dimethylallyl monophosphate (DMAP) to the flavin N5 and C6 atoms of FMN. The protein is Flavin prenyltransferase UbiX of Chlamydia trachomatis serovar D (strain ATCC VR-885 / DSM 19411 / UW-3/Cx).